The chain runs to 130 residues: T-cell receptor beta chain V region A20.2.25 (130 aa).

The N-terminal stretch at 1–21 is a signal peptide; it reads MSCRLLLYVSLCLVETALMNT. A v segment region spans residues 22-112; sequence KITQSPRYLI…DSAVYFCASS (91 aa). N-linked (GlcNAc...) asparagine glycosylation is found at Asn36 and Asn75. The d segment stretch occupies residues 113–115; that stretch reads HGE. The tract at residues 116 to 130 is j segment; the sequence is NTEVFFGKGTTLTVV.

The polypeptide is T-cell receptor beta chain V region A20.2.25 (Mus musculus (Mouse)).